A 401-amino-acid chain; its full sequence is S-adenosylmethionine synthase (401 aa).

An ATP-binding site is contributed by histidine 16. Residue aspartate 18 coordinates Mg(2+). Glutamate 44 contacts K(+). 2 residues coordinate L-methionine: glutamate 57 and glutamine 100. Residues 100-110 form a flexible loop region; that stretch reads QSPDIAQGVNE. ATP-binding positions include 174–176, 241–242, aspartate 250, 256–257, alanine 273, and lysine 277; these read DAK, RF, and RK. Aspartate 250 contributes to the L-methionine binding site. Lysine 281 is an L-methionine binding site.

This sequence belongs to the AdoMet synthase family. Homotetramer; dimer of dimers. Requires Mg(2+) as cofactor. The cofactor is K(+).

It localises to the cytoplasm. It carries out the reaction L-methionine + ATP + H2O = S-adenosyl-L-methionine + phosphate + diphosphate. Its pathway is amino-acid biosynthesis; S-adenosyl-L-methionine biosynthesis; S-adenosyl-L-methionine from L-methionine: step 1/1. Functionally, catalyzes the formation of S-adenosylmethionine (AdoMet) from methionine and ATP. The overall synthetic reaction is composed of two sequential steps, AdoMet formation and the subsequent tripolyphosphate hydrolysis which occurs prior to release of AdoMet from the enzyme. The sequence is that of S-adenosylmethionine synthase from Streptococcus equi subsp. zooepidemicus (strain H70).